We begin with the raw amino-acid sequence, 420 residues long: Glutamyl-tRNA reductase (420 aa).

Residues 49 to 52 (TCNR), Ser107, 112 to 114 (EPQ), and Gln118 each bind substrate. The Nucleophile role is filled by Cys50. An NADP(+)-binding site is contributed by 187 to 192 (GAGETI).

This sequence belongs to the glutamyl-tRNA reductase family. Homodimer.

It carries out the reaction (S)-4-amino-5-oxopentanoate + tRNA(Glu) + NADP(+) = L-glutamyl-tRNA(Glu) + NADPH + H(+). Its pathway is porphyrin-containing compound metabolism; protoporphyrin-IX biosynthesis; 5-aminolevulinate from L-glutamyl-tRNA(Glu): step 1/2. Its function is as follows. Catalyzes the NADPH-dependent reduction of glutamyl-tRNA(Glu) to glutamate 1-semialdehyde (GSA). This Nitrosococcus oceani (strain ATCC 19707 / BCRC 17464 / JCM 30415 / NCIMB 11848 / C-107) protein is Glutamyl-tRNA reductase.